The following is a 350-amino-acid chain: ATP-dependent (S)-NAD(P)H-hydrate dehydratase (350 aa).

One can recognise a YjeF C-terminal domain in the interval 35–342 (LMQSVKRIIP…PEVGRAYEEL (308 aa)). (6S)-NADPHX is bound by residues Gly-139 and 192–198 (NVAEFGR). Residues 230 to 234 (KGPVD) and 249 to 258 (GGLKRCGGQG) contribute to the ATP site. Asp-259 lines the (6S)-NADPHX pocket.

Belongs to the NnrD/CARKD family. Mg(2+) is required as a cofactor.

It is found in the cytoplasm. It catalyses the reaction (6S)-NADHX + ATP = ADP + phosphate + NADH + H(+). The enzyme catalyses (6S)-NADPHX + ATP = ADP + phosphate + NADPH + H(+). Catalyzes the dehydration of the S-form of NAD(P)HX at the expense of ATP, which is converted to ADP. Together with NAD(P)HX epimerase, which catalyzes the epimerization of the S- and R-forms, the enzyme allows the repair of both epimers of NAD(P)HX, a damaged form of NAD(P)H that is a result of enzymatic or heat-dependent hydration. The protein is ATP-dependent (S)-NAD(P)H-hydrate dehydratase of Mycosarcoma maydis (Corn smut fungus).